The sequence spans 98 residues: Small ribosomal subunit protein eS24 (98 aa).

The segment at 76 to 98 (GRQRTERSYLLNRGEPKKEEEEA) is disordered. A compositionally biased stretch (basic and acidic residues) spans 89–98 (GEPKKEEEEA).

The protein belongs to the eukaryotic ribosomal protein eS24 family.

The protein is Small ribosomal subunit protein eS24 of Methanosphaerula palustris (strain ATCC BAA-1556 / DSM 19958 / E1-9c).